Reading from the N-terminus, the 277-residue chain is Methylglyoxal reductase DkgA (277 aa).

Tyr51 acts as the Proton donor in catalysis. His107 contacts substrate. 187 to 241 contacts NADP(+); that stretch reads SPLAQGGKGVFDQEIIRKLAQQYNKTPAQIVIRWHLDSGLIVIPKSVTPARIREN.

This sequence belongs to the aldo/keto reductase family. In terms of assembly, monomer.

Its subcellular location is the cytoplasm. The enzyme catalyses hydroxyacetone + NADP(+) = methylglyoxal + NADPH + H(+). Functionally, aldo-keto reductase that significantly contributes to cellular methylglyoxal detoxification by catalyzing the NADPH-dependent conversion of methylglyoxal to acetol. The protein is Methylglyoxal reductase DkgA of Yersinia pestis.